Here is a 458-residue protein sequence, read N- to C-terminus: Histidine--tRNA ligase (458 aa).

The protein belongs to the class-II aminoacyl-tRNA synthetase family. As to quaternary structure, homodimer.

It is found in the cytoplasm. The catalysed reaction is tRNA(His) + L-histidine + ATP = L-histidyl-tRNA(His) + AMP + diphosphate + H(+). The sequence is that of Histidine--tRNA ligase from Azobacteroides pseudotrichonymphae genomovar. CFP2.